A 1344-amino-acid polypeptide reads, in one-letter code: Protein stu1 (1344 aa).

The stretch at 93 to 131 (LYPLLVERLGDHKERIRAQAAQSFTDMWLAAPEEVEQCV) is one HEAT 1 repeat. The interval 265–292 (HRPVSRAETQASRSVSRLDTHQRPASRM) is disordered. An HEAT 2 repeat occupies 508–544 (VTFTTRILQHVSGACQDKNVQLRLFAAGWLKTLIQKQ). 5 disordered regions span residues 606-637 (RSLL…ANGT), 651-847 (AAQK…STPR), 914-945 (LTEN…ESVP), 984-1004 (PVTH…LSSS), and 1031-1054 (SLPH…PSQR). Composition is skewed to polar residues over residues 691 to 705 (VRTV…SLSS) and 735 to 747 (ATDS…NQID). Residues 748–769 (GSPSAAKSKSSTPSLKSVSSTG) are compositionally biased toward low complexity. 2 stretches are compositionally biased toward polar residues: residues 828 to 847 (FSVT…STPR) and 914 to 942 (LTEN…NQDE). A compositionally biased stretch (low complexity) spans 995 to 1004 (SSKPSGLSSS).

This sequence belongs to the CLASP family. As to quaternary structure, interacts with microtubules.

Its subcellular location is the cytoplasm. It is found in the cytoskeleton. The protein localises to the nucleus. It localises to the spindle. Functionally, microtubule binding protein that promotes the stabilization of dynamic microtubules. Required for mitotic spindle formation. This is Protein stu1 (stu1) from Aspergillus fumigatus (strain ATCC MYA-4609 / CBS 101355 / FGSC A1100 / Af293) (Neosartorya fumigata).